The following is a 151-amino-acid chain: UPF0178 protein PFL_5989 (151 aa).

This sequence belongs to the UPF0178 family.

The polypeptide is UPF0178 protein PFL_5989 (Pseudomonas fluorescens (strain ATCC BAA-477 / NRRL B-23932 / Pf-5)).